The chain runs to 644 residues: Putative aldehyde dehydrogenase-like protein YHR039C (644 aa).

The N-linked (GlcNAc...) asparagine glycan is linked to Asn15. Glu354 acts as the Proton acceptor in catalysis. Cys389 functions as the Nucleophile in the catalytic mechanism. N-linked (GlcNAc...) asparagine glycosylation is found at Asn565 and Asn627.

This sequence belongs to the aldehyde dehydrogenase family. In terms of processing, N-glycosylated.

It is found in the endoplasmic reticulum. The chain is Putative aldehyde dehydrogenase-like protein YHR039C (MSC7) from Saccharomyces cerevisiae (strain ATCC 204508 / S288c) (Baker's yeast).